Consider the following 485-residue polypeptide: Glutamyl-tRNA(Gln) amidotransferase subunit A (485 aa).

Catalysis depends on charge relay system residues Lys79 and Ser154. The active-site Acyl-ester intermediate is the Ser178.

This sequence belongs to the amidase family. GatA subfamily. Heterotrimer of A, B and C subunits.

It carries out the reaction L-glutamyl-tRNA(Gln) + L-glutamine + ATP + H2O = L-glutaminyl-tRNA(Gln) + L-glutamate + ADP + phosphate + H(+). Functionally, allows the formation of correctly charged Gln-tRNA(Gln) through the transamidation of misacylated Glu-tRNA(Gln) in organisms which lack glutaminyl-tRNA synthetase. The reaction takes place in the presence of glutamine and ATP through an activated gamma-phospho-Glu-tRNA(Gln). This chain is Glutamyl-tRNA(Gln) amidotransferase subunit A, found in Sulfurihydrogenibium sp. (strain YO3AOP1).